Reading from the N-terminus, the 315-residue chain is Acetyl-coenzyme A carboxylase carboxyl transferase subunit alpha (315 aa).

The 254-residue stretch at 39-292 (LEDKSAKLLR…GDALEQELNG (254 aa)) folds into the CoA carboxyltransferase C-terminal domain.

This sequence belongs to the AccA family. As to quaternary structure, acetyl-CoA carboxylase is a heterohexamer composed of biotin carboxyl carrier protein (AccB), biotin carboxylase (AccC) and two subunits each of ACCase subunit alpha (AccA) and ACCase subunit beta (AccD).

Its subcellular location is the cytoplasm. The catalysed reaction is N(6)-carboxybiotinyl-L-lysyl-[protein] + acetyl-CoA = N(6)-biotinyl-L-lysyl-[protein] + malonyl-CoA. Its pathway is lipid metabolism; malonyl-CoA biosynthesis; malonyl-CoA from acetyl-CoA: step 1/1. Functionally, component of the acetyl coenzyme A carboxylase (ACC) complex. First, biotin carboxylase catalyzes the carboxylation of biotin on its carrier protein (BCCP) and then the CO(2) group is transferred by the carboxyltransferase to acetyl-CoA to form malonyl-CoA. The chain is Acetyl-coenzyme A carboxylase carboxyl transferase subunit alpha from Sphingopyxis alaskensis (strain DSM 13593 / LMG 18877 / RB2256) (Sphingomonas alaskensis).